Reading from the N-terminus, the 337-residue chain is Fructose-1,6-bisphosphatase class 1 (337 aa).

Mg(2+)-binding residues include glutamate 89, aspartate 112, leucine 114, and aspartate 115. Substrate is bound by residues 115–118 (DGSS), asparagine 208, tyrosine 241, and lysine 271. A Mg(2+)-binding site is contributed by glutamate 277.

It belongs to the FBPase class 1 family. As to quaternary structure, homotetramer. Mg(2+) serves as cofactor.

The protein resides in the cytoplasm. It catalyses the reaction beta-D-fructose 1,6-bisphosphate + H2O = beta-D-fructose 6-phosphate + phosphate. It functions in the pathway carbohydrate biosynthesis; gluconeogenesis. The polypeptide is Fructose-1,6-bisphosphatase class 1 (Yersinia pseudotuberculosis serotype O:1b (strain IP 31758)).